The chain runs to 231 residues: 7-cyano-7-deazaguanine synthase (231 aa).

Position 8–18 (8–18 (FSGGQDSTTCL)) interacts with ATP. Zn(2+) contacts are provided by Cys-188, Cys-197, Cys-200, and Cys-203.

The protein belongs to the QueC family. Zn(2+) serves as cofactor.

The catalysed reaction is 7-carboxy-7-deazaguanine + NH4(+) + ATP = 7-cyano-7-deazaguanine + ADP + phosphate + H2O + H(+). It participates in purine metabolism; 7-cyano-7-deazaguanine biosynthesis. Catalyzes the ATP-dependent conversion of 7-carboxy-7-deazaguanine (CDG) to 7-cyano-7-deazaguanine (preQ(0)). The protein is 7-cyano-7-deazaguanine synthase of Escherichia coli (strain SE11).